A 338-amino-acid chain; its full sequence is Anthranilate phosphoribosyltransferase (338 aa).

Residues Gly-78, Gly-81–Asp-82, Ser-86, Asn-88–Thr-91, Lys-106–Ser-114, and Ser-118 each bind 5-phospho-alpha-D-ribose 1-diphosphate. Gly-78 contributes to the anthranilate binding site. Ser-90 serves as a coordination point for Mg(2+). An anthranilate-binding site is contributed by Asn-109. Residue Arg-163 participates in anthranilate binding. Mg(2+) contacts are provided by Asp-222 and Glu-223.

Belongs to the anthranilate phosphoribosyltransferase family. As to quaternary structure, homodimer. The cofactor is Mg(2+).

The catalysed reaction is N-(5-phospho-beta-D-ribosyl)anthranilate + diphosphate = 5-phospho-alpha-D-ribose 1-diphosphate + anthranilate. Its pathway is amino-acid biosynthesis; L-tryptophan biosynthesis; L-tryptophan from chorismate: step 2/5. Its function is as follows. Catalyzes the transfer of the phosphoribosyl group of 5-phosphorylribose-1-pyrophosphate (PRPP) to anthranilate to yield N-(5'-phosphoribosyl)-anthranilate (PRA). This is Anthranilate phosphoribosyltransferase from Staphylococcus carnosus (strain TM300).